A 437-amino-acid polypeptide reads, in one-letter code: Chromosomal replication initiator protein DnaA (437 aa).

A domain I, interacts with DnaA modulators region spans residues 1–74 (MNLAWNKILE…EACGDKIPVE (74 aa)). The interval 74–98 (EILIETKATSPLQSFLEKSFDQKDF) is domain II. Residues 99–315 (QFNPDYTFET…GALNDIYLYK (217 aa)) are domain III, AAA+ region. ATP contacts are provided by Gly142, Gly144, Lys145, and Thr146. The segment at 316–437 (KSYSLLFLNL…ERISSKYKLQ (122 aa)) is domain IV, binds dsDNA.

This sequence belongs to the DnaA family. In terms of assembly, oligomerizes as a right-handed, spiral filament on DNA at oriC.

Its subcellular location is the cytoplasm. Its function is as follows. Plays an essential role in the initiation and regulation of chromosomal replication. ATP-DnaA binds to the origin of replication (oriC) to initiate formation of the DNA replication initiation complex once per cell cycle. Binds the DnaA box (a 9 base pair repeat at the origin) and separates the double-stranded (ds)DNA. Forms a right-handed helical filament on oriC DNA; dsDNA binds to the exterior of the filament while single-stranded (ss)DNA is stabiized in the filament's interior. The ATP-DnaA-oriC complex binds and stabilizes one strand of the AT-rich DNA unwinding element (DUE), permitting loading of DNA polymerase. After initiation quickly degrades to an ADP-DnaA complex that is not apt for DNA replication. Binds acidic phospholipids. The polypeptide is Chromosomal replication initiator protein DnaA (Leptospira borgpetersenii serovar Hardjo-bovis (strain JB197)).